We begin with the raw amino-acid sequence, 299 residues long: 4-diphosphocytidyl-2-C-methyl-D-erythritol kinase (299 aa).

The active site involves Lys11. Position 94-104 (94-104 (PQGGGLGGGSS)) interacts with ATP. Residue Asp136 is part of the active site.

This sequence belongs to the GHMP kinase family. IspE subfamily.

The catalysed reaction is 4-CDP-2-C-methyl-D-erythritol + ATP = 4-CDP-2-C-methyl-D-erythritol 2-phosphate + ADP + H(+). The protein operates within isoprenoid biosynthesis; isopentenyl diphosphate biosynthesis via DXP pathway; isopentenyl diphosphate from 1-deoxy-D-xylulose 5-phosphate: step 3/6. Functionally, catalyzes the phosphorylation of the position 2 hydroxy group of 4-diphosphocytidyl-2C-methyl-D-erythritol. The chain is 4-diphosphocytidyl-2-C-methyl-D-erythritol kinase from Bordetella parapertussis (strain 12822 / ATCC BAA-587 / NCTC 13253).